Consider the following 550-residue polypeptide: Arginine--tRNA ligase (550 aa).

The short motif at 122-132 (GNPTGPLHLAH) is the 'HIGH' region element.

It belongs to the class-I aminoacyl-tRNA synthetase family. As to quaternary structure, monomer.

Its subcellular location is the cytoplasm. It carries out the reaction tRNA(Arg) + L-arginine + ATP = L-arginyl-tRNA(Arg) + AMP + diphosphate. In Tropheryma whipplei (strain TW08/27) (Whipple's bacillus), this protein is Arginine--tRNA ligase.